A 222-amino-acid chain; its full sequence is PKHD-type hydroxylase cce_3668 (222 aa).

Residues 78-175 (HIHSLRFSRY…RLVVVGWVHS (98 aa)) form the Fe2OG dioxygenase domain. Residues His-96, Asp-98, and His-156 each contribute to the Fe cation site. Arg-166 provides a ligand contact to 2-oxoglutarate.

Requires Fe(2+) as cofactor. L-ascorbate is required as a cofactor.

The sequence is that of PKHD-type hydroxylase cce_3668 from Crocosphaera subtropica (strain ATCC 51142 / BH68) (Cyanothece sp. (strain ATCC 51142)).